The sequence spans 229 residues: Orotidine 5'-phosphate decarboxylase (229 aa).

Substrate is bound by residues aspartate 10, lysine 32, 59 to 68, threonine 119, arginine 180, glutamine 189, glycine 209, and arginine 210; that span reads DLKFHDIPNT. The Proton donor role is filled by lysine 61.

It belongs to the OMP decarboxylase family. Type 1 subfamily. Homodimer.

It catalyses the reaction orotidine 5'-phosphate + H(+) = UMP + CO2. Its pathway is pyrimidine metabolism; UMP biosynthesis via de novo pathway; UMP from orotate: step 2/2. Functionally, catalyzes the decarboxylation of orotidine 5'-monophosphate (OMP) to uridine 5'-monophosphate (UMP). The chain is Orotidine 5'-phosphate decarboxylase from Legionella pneumophila subsp. pneumophila (strain Philadelphia 1 / ATCC 33152 / DSM 7513).